The following is a 504-amino-acid chain: SPbeta prophage-derived uncharacterized protein YorI (504 aa).

This is SPbeta prophage-derived uncharacterized protein YorI (yorI) from Bacillus subtilis (strain 168).